The sequence spans 428 residues: AA14 family lytic polysaccharide monooxygenase A (428 aa).

The N-terminal stretch at 1 to 21 (MLRSLPASLALVAAFASKASA) is a signal peptide. Asn-34 and Asn-52 each carry an N-linked (GlcNAc...) asparagine glycan. 5 disulfide bridges follow: Cys-88-Cys-112, Cys-131-Cys-158, Cys-174-Cys-179, Cys-181-Cys-203, and Cys-223-Cys-239. N-linked (GlcNAc...) asparagine glycosylation occurs at Asn-155. 2 disordered regions span residues 216–239 (KPAV…PGNC) and 292–428 (SSGT…HNAH). Residues 223 to 232 (CGADPDHGKP) show a composition bias toward basic and acidic residues. An N-linked (GlcNAc...) asparagine glycan is attached at Asn-238. Over residues 292 to 379 (SSGTGSSPTS…SVATEASSSP (88 aa)) the composition is skewed to low complexity. The segment covering 380 to 402 (IASTTVDEAVVSSSTVGSINPTR) has biased composition (polar residues). Positions 414–428 (QKKKRKHARHLHNAH) are enriched in basic residues.

Requires Cu(2+) as cofactor.

Its subcellular location is the secreted. In terms of biological role, lytic polysaccharide monooxygenase (LPMO) showing oxidase and peroxidase activities that are common for LPMOs. Catalysis by LPMOs requires the reduction of the active-site copper from Cu(II) to Cu(I) by a reducing agent and H(2)O(2) or O(2) as a cosubstrate. Shows no activity on cellulose-associated xylan or any other tested polysaccharide substrate, meaning that the substrate rremains unknown. The protein is AA14 family lytic polysaccharide monooxygenase A of Trametes coccinea (strain BRFM310) (Pycnoporus coccineus).